A 587-amino-acid polypeptide reads, in one-letter code: Heavy metal-associated isoprenylated plant protein 33 (587 aa).

Positions 9-72 constitute an HMA domain; the sequence is IQTCVLKVNI…KLLKSGKHAE (64 aa). 2 residues coordinate a metal cation: Cys20 and Cys23. Disordered stretches follow at residues 98–146, 176–261, 287–449, 462–504, and 532–587; these read QIDH…MVIP, LKLP…KPMM, AHKN…PMSN, PGGG…QQQQ, and YARP…CNIM. 2 stretches are compositionally biased toward gly residues: residues 104–113 and 121–140; these read KGGGGGGGGP and KIGG…GGGP. The span at 194–208 shows a compositional bias: low complexity; that stretch reads PMNKNPQMPNNPNQK. Residues 215–248 are compositionally biased toward acidic residues; that stretch reads PDDDDEEDFSDEFDDEFDEDDDEFDDDLEDDEFD. 3 stretches are compositionally biased toward gly residues: residues 290–300, 312–419, and 428–445; these read NGGGPGPAGGK, MGGG…GGGP, and GAMG…GGPG. The span at 471 to 483 shows a compositional bias: low complexity; that stretch reads SAEAPPGYFQGQV. Pro residues-rich tracts occupy residues 534-547 and 554-565; these read RPPP…PQPQ and YPYPYPYPPQYP. The span at 578–587 shows a compositional bias: polar residues; that stretch reads DENTSSCNIM. Cys584 carries the cysteine methyl ester modification. Cys584 carries S-farnesyl cysteine lipidation. Positions 585 to 587 are cleaved as a propeptide — removed in mature form; that stretch reads NIM.

It belongs to the HIPP family.

Heavy-metal-binding protein. The sequence is that of Heavy metal-associated isoprenylated plant protein 33 from Arabidopsis thaliana (Mouse-ear cress).